Consider the following 268-residue polypeptide: Shikimate dehydrogenase (NADP(+)) (268 aa).

Shikimate contacts are provided by residues 15-17 (SKS) and T60. Residue K64 is the Proton acceptor of the active site. Positions 85 and 101 each coordinate shikimate. Residues 121-125 (GAGGS) and L208 each bind NADP(+). Residue Y210 coordinates shikimate. G230 provides a ligand contact to NADP(+).

This sequence belongs to the shikimate dehydrogenase family. In terms of assembly, homodimer.

It catalyses the reaction shikimate + NADP(+) = 3-dehydroshikimate + NADPH + H(+). It participates in metabolic intermediate biosynthesis; chorismate biosynthesis; chorismate from D-erythrose 4-phosphate and phosphoenolpyruvate: step 4/7. Its function is as follows. Involved in the biosynthesis of the chorismate, which leads to the biosynthesis of aromatic amino acids. Catalyzes the reversible NADPH linked reduction of 3-dehydroshikimate (DHSA) to yield shikimate (SA). This Helicobacter hepaticus (strain ATCC 51449 / 3B1) protein is Shikimate dehydrogenase (NADP(+)).